The chain runs to 228 residues: U1 small nuclear ribonucleoprotein C (228 aa).

Residues A11–H43 form a Matrin-type; degenerate zinc finger. The disordered stretch occupies residues G83–H127. The segment covering P105–H127 has biased composition (pro residues).

Belongs to the U1 small nuclear ribonucleoprotein C family. As to quaternary structure, U1 snRNP is composed of the 7 core Sm proteins B/B', D1, D2, D3, E, F and G that assemble in a heptameric protein ring on the Sm site of the small nuclear RNA to form the core snRNP, and at least 3 U1 snRNP-specific proteins U1-70K, U1-A and U1-C. U1-C interacts with U1 snRNA and the 5' splice-site region of the pre-mRNA.

The protein resides in the nucleus. Component of the spliceosomal U1 snRNP, which is essential for recognition of the pre-mRNA 5' splice-site and the subsequent assembly of the spliceosome. U1-C is directly involved in initial 5' splice-site recognition for both constitutive and regulated alternative splicing. The interaction with the 5' splice-site seems to precede base-pairing between the pre-mRNA and the U1 snRNA. Stimulates commitment or early (E) complex formation by stabilizing the base pairing of the 5' end of the U1 snRNA and the 5' splice-site region. The sequence is that of U1 small nuclear ribonucleoprotein C from Batrachochytrium dendrobatidis (strain JAM81 / FGSC 10211) (Frog chytrid fungus).